The chain runs to 111 residues: MIQVLLVIICLAVFPYQGSSIILESGNVNDFELVYPKKVTVLPTGAMNSAHPCCDPVMCKPKRGEHCISGPCCRNCKFLSPGTICKKAWGDDMNDYCTGISSDCPRNPWKD.

Positions 1–20 (MIQVLLVIICLAVFPYQGSS) are cleaved as a signal peptide. Positions 21–46 (IILESGNVNDFELVYPKKVTVLPTGA) are excised as a propeptide. Residues 26–111 (GNVNDFELVY…SDCPRNPWKD (86 aa)) form the Disintegrin domain. 4 cysteine pairs are disulfide-bonded: cysteine 53–cysteine 76, cysteine 67–cysteine 73, cysteine 72–cysteine 97, and cysteine 85–cysteine 104. The short motif at 89–91 (WGD) is the Cell attachment site; atypical (WGD) element. Positions 110–111 (KD) are excised as a propeptide.

The protein belongs to the disintegrin family. Dimeric disintegrin subfamily. As to quaternary structure, heterodimer; disulfide-linked. As to expression, expressed by the venom gland.

It localises to the secreted. Functionally, poor inhibitor of platelet aggregation. The disintegrin inhibits the adhesion of cells expressing the RGD-dependent integrin alpha-5/beta-1 (ITGA5/ITGB1) to immobilized fibronectin. Inhibition on alpha-IIb/beta-3 (ITGA2B/ITGB3) is low. This Echis ocellatus (Ocellated saw-scaled viper) protein is Disintegrin Eo1 subunit 1.